A 514-amino-acid polypeptide reads, in one-letter code: RNA-binding region-containing protein 3 (514 aa).

A disordered region spans residues 1–26 (MAGPEPPMPLSRGGPGSASLSPPRGD). Ser-21 carries the phosphoserine modification. Residues 27–102 (RTLLVRHLPA…HTLVVEFAKE (76 aa)) enclose the RRM 1 domain. 3 disordered regions span residues 106–133 (VHSP…EKKE), 213–282 (MPLH…VRKK), and 337–363 (ETQP…FGKI). Ser-108 carries the phosphoserine modification. Positions 115–133 (TEKKKRLDDTVENDKEKKE) are enriched in basic and acidic residues. Over residues 217-230 (APLPPTSPQPPEEP) the composition is skewed to pro residues. Residue Ser-349 is modified to Phosphoserine. The RRM 2 domain occupies 418 to 501 (CRIYVKNLAR…KPMVVQFARS (84 aa)).

Component of the U11/U12 snRNPs that are part of the U12-type spliceosome. Found in a complex with m(7)G-capped U12 snRNA. Interacts with PDCD7.

The protein resides in the nucleus. Functionally, participates in pre-mRNA U12-dependent splicing, performed by the minor spliceosome which removes U12-type introns. U12-type introns comprises less than 1% of all non-coding sequences. Binds to the 3'-stem-loop of m(7)G-capped U12 snRNA. This is RNA-binding region-containing protein 3 (Rnpc3) from Mus musculus (Mouse).